Here is a 148-residue protein sequence, read N- to C-terminus: UPF0260 protein PC1_1943 (148 aa).

Belongs to the UPF0260 family.

The protein is UPF0260 protein PC1_1943 of Pectobacterium carotovorum subsp. carotovorum (strain PC1).